The primary structure comprises 222 residues: UPF0758 protein CT0611 (222 aa).

In terms of domain architecture, MPN spans 100–222 (KVKGARDVFE…WFSFRDHALL (123 aa)). The Zn(2+) site is built by H171, H173, and D184. Positions 171-184 (HNHPSGDVQPSNAD) match the JAMM motif motif.

The protein belongs to the UPF0758 family.

This chain is UPF0758 protein CT0611, found in Chlorobaculum tepidum (strain ATCC 49652 / DSM 12025 / NBRC 103806 / TLS) (Chlorobium tepidum).